We begin with the raw amino-acid sequence, 296 residues long: Homoserine kinase (296 aa).

84–94 (PLARGLGSSSS) is an ATP binding site.

This sequence belongs to the GHMP kinase family. Homoserine kinase subfamily.

Its subcellular location is the cytoplasm. The enzyme catalyses L-homoserine + ATP = O-phospho-L-homoserine + ADP + H(+). It functions in the pathway amino-acid biosynthesis; L-threonine biosynthesis; L-threonine from L-aspartate: step 4/5. Functionally, catalyzes the ATP-dependent phosphorylation of L-homoserine to L-homoserine phosphate. This is Homoserine kinase from Lactococcus lactis subsp. lactis (strain IL1403) (Streptococcus lactis).